We begin with the raw amino-acid sequence, 315 residues long: Calumenin-B (315 aa).

Residues 1 to 19 (MEQWPLLFVVALCILQSSS) form the signal peptide. Basic and acidic residues predominate over residues 22–39 (MEKKDRVHHDAPLSNKDH). A disordered region spans residues 22–42 (MEKKDRVHHDAPLSNKDHDDE). EF-hand domains lie at 68-103 (ESKE…AQRR), 104-139 (WIYE…YILD), 151-186 (QMMT…EEFD), 188-223 (MKDI…QNGD), 229-264 (WVKT…ADYD), and 265-300 (HAEA…FVGS). Ca(2+)-binding residues include Asp81, Asp83, Asp85, Glu92, Asp117, Asn119, Asp121, Glu128, Asp164, Asp166, Asp168, Arg170, Glu175, Asp201, Asn203, Asp205, Glu212, Asp242, Asn244, Asp246, Arg248, Glu253, Asp278, Asp280, Asp282, Arg284, and Glu289. The Prevents secretion from ER signature appears at 312-315 (HDEF).

The protein belongs to the CREC family. As to quaternary structure, interacts with ggcx.

The protein resides in the endoplasmic reticulum membrane. It localises to the golgi apparatus. It is found in the secreted. Its subcellular location is the melanosome. The protein localises to the sarcoplasmic reticulum lumen. Functionally, involved in regulation of vitamin K-dependent carboxylation of multiple N-terminal glutamate residues. Seems to inhibit gamma-carboxylase ggcx. Binds 7 calcium ions with a low affinity. The chain is Calumenin-B (calub) from Danio rerio (Zebrafish).